The sequence spans 37 residues: Non-specific lipid-transfer protein P4 (37 aa).

The protein belongs to the plant LTP family.

The protein resides in the secreted. Plant non-specific lipid-transfer proteins transfer phospholipids as well as galactolipids across membranes. May play a role in wax or cutin deposition in the cell walls of expanding epidermal cells and certain secretory tissues. The sequence is that of Non-specific lipid-transfer protein P4 from Vitis sp. (Grape).